Reading from the N-terminus, the 120-residue chain is Crustacean hyperglycemic hormones 1 (120 aa).

Residues M1–A24 form the signal peptide. Disulfide bonds link C53/C89, C69/C85, and C72/C98. Position 118 is a valine amide (V118).

The protein belongs to the arthropod CHH/MIH/GIH/VIH hormone family. In terms of tissue distribution, produced by the medulla terminalis X-organ in the eyestalks and transported to the sinus gland where they are stored and released.

It localises to the secreted. In terms of biological role, hormone found in the sinus gland of isopods and decapods which controls the blood sugar level. Has a secretagogue action over the amylase released from the midgut gland. May act as a stress hormone and may be involved in the control of molting and reproduction. This Penaeus japonicus (Kuruma prawn) protein is Crustacean hyperglycemic hormones 1.